The sequence spans 412 residues: Probable serine/threonine-protein kinase PBL4 (412 aa).

Residue glycine 2 is the site of N-myristoyl glycine attachment. A lipid anchor (S-palmitoyl cysteine) is attached at cysteine 4. The disordered stretch occupies residues 14–40 (RESPYRGSSRISAKRSQSSRLSSLTIQ). Positions 21–40 (SSRISAKRSQSSRLSSLTIQ) are enriched in low complexity. Threonine 72 carries the post-translational modification Phosphothreonine. A Protein kinase domain is found at 83 to 369 (FRPDSVIGEG…STLEELEMTL (287 aa)). ATP contacts are provided by residues 89 to 97 (IGEGGFGYV) and lysine 121. Phosphotyrosine is present on tyrosine 167. Aspartate 215 (proton acceptor) is an active-site residue. Residues serine 219 and serine 249 each carry the phosphoserine modification. A phosphothreonine mark is found at threonine 250 and threonine 255. Tyrosine 263 is subject to Phosphotyrosine.

This sequence belongs to the protein kinase superfamily. Ser/Thr protein kinase family.

It is found in the cell membrane. It catalyses the reaction L-seryl-[protein] + ATP = O-phospho-L-seryl-[protein] + ADP + H(+). It carries out the reaction L-threonyl-[protein] + ATP = O-phospho-L-threonyl-[protein] + ADP + H(+). May be involved in plant defense signaling. This is Probable serine/threonine-protein kinase PBL4 from Arabidopsis thaliana (Mouse-ear cress).